The following is a 413-amino-acid chain: Peptidase T (413 aa).

H84 contributes to the Zn(2+) binding site. Residue D86 is part of the active site. D147 is a binding site for Zn(2+). E181 functions as the Proton acceptor in the catalytic mechanism. Positions 182, 204, and 386 each coordinate Zn(2+).

It belongs to the peptidase M20B family. The cofactor is Zn(2+).

It localises to the cytoplasm. It carries out the reaction Release of the N-terminal residue from a tripeptide.. Functionally, cleaves the N-terminal amino acid of tripeptides. The sequence is that of Peptidase T from Ligilactobacillus salivarius (strain UCC118) (Lactobacillus salivarius).